A 603-amino-acid chain; its full sequence is Adenine deaminase 1 (603 aa).

The protein belongs to the metallo-dependent hydrolases superfamily. Adenine deaminase family. The cofactor is Mn(2+).

It catalyses the reaction adenine + H2O + H(+) = hypoxanthine + NH4(+). This chain is Adenine deaminase 1, found in Carboxydothermus hydrogenoformans (strain ATCC BAA-161 / DSM 6008 / Z-2901).